The following is a 397-amino-acid chain: ATP-dependent RNA helicase RhlB (397 aa).

Residues 9–37 (TRFHDFNLAPSLMHAIHDLGFPYCTPIQA) carry the Q motif motif. The Helicase ATP-binding domain maps to 40-220 (LGFTLRGQDA…KQWTVDPAIV (181 aa)). 53 to 60 (AQTGTGKT) lines the ATP pocket. A DEAD box motif is present at residues 166–169 (DEAD). The region spanning 243–393 (DKYKLLYNLV…MPPAELLKPV (151 aa)) is the Helicase C-terminal domain.

It belongs to the DEAD box helicase family. RhlB subfamily. In terms of assembly, component of the RNA degradosome, which is a multiprotein complex involved in RNA processing and mRNA degradation.

The protein resides in the cytoplasm. It carries out the reaction ATP + H2O = ADP + phosphate + H(+). In terms of biological role, DEAD-box RNA helicase involved in RNA degradation. Has RNA-dependent ATPase activity and unwinds double-stranded RNA. In Pseudomonas aeruginosa (strain UCBPP-PA14), this protein is ATP-dependent RNA helicase RhlB.